The chain runs to 330 residues: Ketol-acid reductoisomerase (NADP(+)) (330 aa).

The KARI N-terminal Rossmann domain occupies 2-182; it reads VKVYYDADAN…GCTKAGVFET (181 aa). Residues 25 to 28, R48, S51, and 83 to 86 contribute to the NADP(+) site; these read YGSQ and DEIQ. H108 is an active-site residue. G134 serves as a coordination point for NADP(+). Positions 183–328 constitute a KARI C-terminal knotted domain; the sequence is SFREETETDL…ARLREMMPWL (146 aa). Mg(2+) contacts are provided by D191, E195, E227, and E231. S252 is a substrate binding site.

The protein belongs to the ketol-acid reductoisomerase family. Mg(2+) is required as a cofactor.

It catalyses the reaction (2R)-2,3-dihydroxy-3-methylbutanoate + NADP(+) = (2S)-2-acetolactate + NADPH + H(+). It carries out the reaction (2R,3R)-2,3-dihydroxy-3-methylpentanoate + NADP(+) = (S)-2-ethyl-2-hydroxy-3-oxobutanoate + NADPH + H(+). Its pathway is amino-acid biosynthesis; L-isoleucine biosynthesis; L-isoleucine from 2-oxobutanoate: step 2/4. It participates in amino-acid biosynthesis; L-valine biosynthesis; L-valine from pyruvate: step 2/4. In terms of biological role, involved in the biosynthesis of branched-chain amino acids (BCAA). Catalyzes an alkyl-migration followed by a ketol-acid reduction of (S)-2-acetolactate (S2AL) to yield (R)-2,3-dihydroxy-isovalerate. In the isomerase reaction, S2AL is rearranged via a Mg-dependent methyl migration to produce 3-hydroxy-3-methyl-2-ketobutyrate (HMKB). In the reductase reaction, this 2-ketoacid undergoes a metal-dependent reduction by NADPH to yield (R)-2,3-dihydroxy-isovalerate. The polypeptide is Ketol-acid reductoisomerase (NADP(+)) (Desulforamulus reducens (strain ATCC BAA-1160 / DSM 100696 / MI-1) (Desulfotomaculum reducens)).